A 219-amino-acid polypeptide reads, in one-letter code: 2,5-diamino-6-ribosylamino-4(3H)-pyrimidinone 5'-phosphate reductase (219 aa).

NADP(+) contacts are provided by residues Thr52, Asp56, 87 to 90, Val134, and 156 to 159; these read SRCR and GGTL.

This sequence belongs to the HTP reductase family. In terms of assembly, homodimer.

It carries out the reaction 2,5-diamino-6-(1-D-ribitylamino)pyrimidin-4(3H)-one 5'-phosphate + NADP(+) = 2,5-diamino-6-(1-D-ribosylamino)pyrimidin-4(3H)-one 5'-phosphate + NADPH + H(+). It catalyses the reaction 2,5-diamino-6-(1-D-ribitylamino)pyrimidin-4(3H)-one 5'-phosphate + NAD(+) = 2,5-diamino-6-(1-D-ribosylamino)pyrimidin-4(3H)-one 5'-phosphate + NADH + H(+). It functions in the pathway cofactor biosynthesis; riboflavin biosynthesis. Catalyzes an early step in riboflavin biosynthesis, the NADPH-dependent reduction of the ribose side chain of 2,5-diamino-6-ribosylamino-4(3H)-pyrimidinone 5'-phosphate, yielding 2,5-diamino-6-ribitylamino-4(3H)-pyrimidinone 5'-phosphate. This Archaeoglobus fulgidus (strain ATCC 49558 / DSM 4304 / JCM 9628 / NBRC 100126 / VC-16) protein is 2,5-diamino-6-ribosylamino-4(3H)-pyrimidinone 5'-phosphate reductase.